Here is an 850-residue protein sequence, read N- to C-terminus: Adenylate cyclase (850 aa).

The tract at residues 1-535 (MYLYIETLKQ…DISHHFPLRL (535 aa)) is catalytic. The segment at 541–850 (KALYSPCEIR…SLPTKQCQLH (310 aa)) is regulatory.

It belongs to the adenylyl cyclase class-1 family.

Its subcellular location is the cytoplasm. It carries out the reaction ATP = 3',5'-cyclic AMP + diphosphate. Its activity is regulated as follows. The regulatory domain is involved in the regulation of cyclase activity by the carbon source. This chain is Adenylate cyclase (cya), found in Yersinia pestis.